Here is a 354-residue protein sequence, read N- to C-terminus: Glycine betaine/proline betaine transport system permease protein ProW (354 aa).

Positions 1–28 (MADQTNPWDTAQVADTTTQTADAWGTPA) are disordered. Topologically, residues 1–99 (MADQTNPWDT…VDYILNGFQQ (99 aa)) are cytoplasmic. The span at 9 to 23 (DTAQVADTTTQTADA) shows a compositional bias: low complexity. A helical transmembrane segment spans residues 100–120 (LLLGMPAPVAIILFALIAWQV). Residue Ser121 is a topological domain, periplasmic. The chain crosses the membrane as a helical span at residues 122–142 (GVGMGIATLISLIAIGAIGAW). Residues 143 to 148 (SQAMIT) lie on the Cytoplasmic side of the membrane. The region spanning 145–324 (AMITLALVLT…ILAIILDRLT (180 aa)) is the ABC transmembrane type-1 domain. A helical membrane pass occupies residues 149-169 (LALVLTALLFCVVIGLPMGIW). At 170 to 198 (LARSPRAAKIVRPLLDAMQTTPAFVYLVP) the chain is on the periplasmic side. The helical transmembrane segment at 199-219 (IVMLFGIGNVPGVVVTIIFAL) threads the bilayer. Residues 220–270 (PPIVRLTILGINQVPADLIEASRSFGASPRQMLFKVQLPLAMPTIMAGVNQ) are Cytoplasmic-facing. A helical membrane pass occupies residues 271-291 (TLMLALSMVVIASMIAVGGLG). Topologically, residues 292-300 (QMVLRGIGR) are periplasmic. A helical transmembrane segment spans residues 301-321 (LDMGLATVGGVGIVILAIILD). The Cytoplasmic segment spans residues 322-354 (RLTQAVGRDSRSRGNRRWYTTGPVGLITRPFVK).

It belongs to the binding-protein-dependent transport system permease family. CysTW subfamily. In terms of assembly, the complex is composed of two ATP-binding proteins (ProV), two transmembrane proteins (ProW) and a solute-binding protein (ProX).

It localises to the cell inner membrane. Part of the ProU ABC transporter complex involved in glycine betaine and proline betaine uptake. Probably responsible for the translocation of the substrate across the membrane. The sequence is that of Glycine betaine/proline betaine transport system permease protein ProW from Salmonella typhimurium (strain LT2 / SGSC1412 / ATCC 700720).